We begin with the raw amino-acid sequence, 418 residues long: UDP-N-acetylglucosamine 1-carboxyvinyltransferase (418 aa).

23–24 (KN) provides a ligand contact to phosphoenolpyruvate. Residue R93 coordinates UDP-N-acetyl-alpha-D-glucosamine. Residue D117 is the Proton donor of the active site. UDP-N-acetyl-alpha-D-glucosamine contacts are provided by D305 and I327.

It belongs to the EPSP synthase family. MurA subfamily.

It localises to the cytoplasm. It catalyses the reaction phosphoenolpyruvate + UDP-N-acetyl-alpha-D-glucosamine = UDP-N-acetyl-3-O-(1-carboxyvinyl)-alpha-D-glucosamine + phosphate. It functions in the pathway cell wall biogenesis; peptidoglycan biosynthesis. In terms of biological role, cell wall formation. Adds enolpyruvyl to UDP-N-acetylglucosamine. This is UDP-N-acetylglucosamine 1-carboxyvinyltransferase from Corynebacterium jeikeium (strain K411).